The primary structure comprises 238 residues: uncharacterized protein (238 aa).

The N-terminal stretch at 1 to 19 is a signal peptide; sequence MKINLFFVFLFELLHFVAA. Topologically, residues 20 to 197 are lumenal; that stretch reads YSCEGDESAA…LALYGHLSQK (178 aa). A helical membrane pass occupies residues 198 to 216; it reads YTPLGMNVAIFGISAYIMY. Residues 217–238 lie on the Cytoplasmic side of the membrane; that stretch reads RSSKKAKQKQAAAAAAAAAKKK.

It is found in the endoplasmic reticulum membrane. This is an uncharacterized protein from Schizosaccharomyces pombe (strain 972 / ATCC 24843) (Fission yeast).